The following is a 366-amino-acid chain: Ribosomal RNA large subunit methyltransferase M (366 aa).

S-adenosyl-L-methionine-binding positions include Ser-188, 221–224 (CPGG), Asp-240, Asp-260, and Asp-277. Catalysis depends on Lys-306, which acts as the Proton acceptor.

It belongs to the class I-like SAM-binding methyltransferase superfamily. RNA methyltransferase RlmE family. RlmM subfamily. Monomer.

The protein resides in the cytoplasm. It carries out the reaction cytidine(2498) in 23S rRNA + S-adenosyl-L-methionine = 2'-O-methylcytidine(2498) in 23S rRNA + S-adenosyl-L-homocysteine + H(+). In terms of biological role, catalyzes the 2'-O-methylation at nucleotide C2498 in 23S rRNA. In Escherichia fergusonii (strain ATCC 35469 / DSM 13698 / CCUG 18766 / IAM 14443 / JCM 21226 / LMG 7866 / NBRC 102419 / NCTC 12128 / CDC 0568-73), this protein is Ribosomal RNA large subunit methyltransferase M.